A 127-amino-acid polypeptide reads, in one-letter code: Phosphoribosyl-AMP cyclohydrolase (127 aa).

Aspartate 96 is a Mg(2+) binding site. Cysteine 97 lines the Zn(2+) pocket. Residues aspartate 98 and aspartate 100 each coordinate Mg(2+). Positions 113 and 120 each coordinate Zn(2+).

The protein belongs to the PRA-CH family. Homodimer. Mg(2+) serves as cofactor. Requires Zn(2+) as cofactor.

It is found in the cytoplasm. The catalysed reaction is 1-(5-phospho-beta-D-ribosyl)-5'-AMP + H2O = 1-(5-phospho-beta-D-ribosyl)-5-[(5-phospho-beta-D-ribosylamino)methylideneamino]imidazole-4-carboxamide. Its pathway is amino-acid biosynthesis; L-histidine biosynthesis; L-histidine from 5-phospho-alpha-D-ribose 1-diphosphate: step 3/9. Functionally, catalyzes the hydrolysis of the adenine ring of phosphoribosyl-AMP. This is Phosphoribosyl-AMP cyclohydrolase from Corynebacterium jeikeium (strain K411).